The primary structure comprises 120 residues: UPF0231 protein YacL (120 aa).

It belongs to the UPF0231 family.

This is UPF0231 protein YacL from Salmonella agona (strain SL483).